The chain runs to 434 residues: 4-hydroxy-3-methylbut-2-en-1-yl diphosphate synthase (flavodoxin) (434 aa).

The segment covering 1–15 has biased composition (polar residues); the sequence is MQSEAQSPRSSQICS. The tract at residues 1-24 is disordered; that stretch reads MQSEAQSPRSSQICSTEPVFGGHQ. Positions 322, 325, 368, and 375 each coordinate [4Fe-4S] cluster.

This sequence belongs to the IspG family. The cofactor is [4Fe-4S] cluster.

The enzyme catalyses (2E)-4-hydroxy-3-methylbut-2-enyl diphosphate + oxidized [flavodoxin] + H2O + 2 H(+) = 2-C-methyl-D-erythritol 2,4-cyclic diphosphate + reduced [flavodoxin]. Its pathway is isoprenoid biosynthesis; isopentenyl diphosphate biosynthesis via DXP pathway; isopentenyl diphosphate from 1-deoxy-D-xylulose 5-phosphate: step 5/6. Converts 2C-methyl-D-erythritol 2,4-cyclodiphosphate (ME-2,4cPP) into 1-hydroxy-2-methyl-2-(E)-butenyl 4-diphosphate. The protein is 4-hydroxy-3-methylbut-2-en-1-yl diphosphate synthase (flavodoxin) of Burkholderia cenocepacia (strain ATCC BAA-245 / DSM 16553 / LMG 16656 / NCTC 13227 / J2315 / CF5610) (Burkholderia cepacia (strain J2315)).